Consider the following 67-residue polypeptide: Small ribosomal subunit protein eS17 (67 aa).

Belongs to the eukaryotic ribosomal protein eS17 family.

The chain is Small ribosomal subunit protein eS17 from Thermococcus onnurineus (strain NA1).